The sequence spans 658 residues: Alkyldihydroxyacetonephosphate synthase, peroxisomal (658 aa).

Disordered stretches follow at residues M1–L41 and A63–K86. Residues M1–C58 constitute a peroxisome transit peptide. A compositionally biased stretch (basic and acidic residues) spans A23–G35. Over residues A63–A77 the composition is skewed to low complexity. Phosphoserine is present on S65. T74 is subject to Phosphothreonine. Residue K102 is modified to N6-acetyllysine. In terms of domain architecture, FAD-binding PCMH-type spans F202 to V384. FAD is bound by residues P234–S240, D303–T309, and T316–S319. K347 is subject to N6-acetyllysine. Residue E368–I374 coordinates FAD. Position 515 (R515) interacts with substrate. The active-site Proton donor/acceptor is the Y578. 2 important for enzyme activity regions span residues H615–H617 and N654–L658.

The protein belongs to the FAD-binding oxidoreductase/transferase type 4 family. Homodimer. FAD is required as a cofactor.

It localises to the peroxisome membrane. Its subcellular location is the peroxisome. It catalyses the reaction a long chain fatty alcohol + a 1-acylglycerone 3-phosphate = a 1-O-alkylglycerone 3-phosphate + a long-chain fatty acid + H(+). It carries out the reaction hexadecan-1-ol + 1-hexadecanoylglycerone 3-phosphate = 1-O-hexadecylglycerone 3-phosphate + hexadecanoate + H(+). The catalysed reaction is 1-hexadecanoylglycerone 3-phosphate + a long-chain fatty acid = a 1-acylglycerone 3-phosphate + hexadecanoate. It participates in glycerolipid metabolism; ether lipid biosynthesis. Its function is as follows. Catalyzes the exchange of the acyl chain in acyl-dihydroxyacetonephosphate (acyl-DHAP) for a long chain fatty alcohol, yielding the first ether linked intermediate, i.e. alkyl-dihydroxyacetonephosphate (alkyl-DHAP), in the pathway of ether lipid biosynthesis. The protein is Alkyldihydroxyacetonephosphate synthase, peroxisomal (AGPS) of Homo sapiens (Human).